A 334-amino-acid polypeptide reads, in one-letter code: N-acetylmuramate/N-acetylglucosamine kinase (334 aa).

This sequence belongs to the kinase AmgK family.

The catalysed reaction is N-acetyl-D-muramate + ATP = N-acetyl-alpha-D-muramate 1-phosphate + ADP + H(+). The enzyme catalyses N-acetyl-D-glucosamine + ATP = N-acetyl-alpha-D-glucosamine 1-phosphate + ADP + H(+). It functions in the pathway cell wall biogenesis; peptidoglycan recycling. In terms of biological role, sugar kinase that catalyzes the ATP-dependent phosphorylation of N-acetylmuramate (MurNAc) and N-acetylglucosamine (GlcNAc) at its C1 hydroxyl group, leading to MurNAc alpha-1P and GlcNAc alpha-1P, respectively. Is likely involved in peptidoglycan recycling as part of a cell wall recycling pathway that bypasses de novo biosynthesis of the peptidoglycan precursor UDP-MurNAc. Is able to complement the fosfomycin sensitivity phenotype of a P.putida mutant lacking amgK. The chain is N-acetylmuramate/N-acetylglucosamine kinase from Neisseria meningitidis serogroup B (strain ATCC BAA-335 / MC58).